The chain runs to 154 residues: Myoglobin (154 aa).

Residues 2–148 form the Globin domain; that stretch reads GLSDGEWQLV…FRNDIAAKYK (147 aa). S4 bears the Phosphoserine mark. A nitrite-binding site is contributed by H65. Residue H65 coordinates O2. The residue at position 68 (T68) is a Phosphothreonine. Residue H94 participates in heme b binding.

Monomer.

It localises to the cytoplasm. Its subcellular location is the sarcoplasm. It catalyses the reaction Fe(III)-heme b-[protein] + nitric oxide + H2O = Fe(II)-heme b-[protein] + nitrite + 2 H(+). The enzyme catalyses H2O2 + AH2 = A + 2 H2O. Functionally, monomeric heme protein which primary function is to store oxygen and facilitate its diffusion within muscle tissues. Reversibly binds oxygen through a pentacoordinated heme iron and enables its timely and efficient release as needed during periods of heightened demand. Depending on the oxidative conditions of tissues and cells, and in addition to its ability to bind oxygen, it also has a nitrite reductase activity whereby it regulates the production of bioactive nitric oxide. Under stress conditions, like hypoxia and anoxia, it also protects cells against reactive oxygen species thanks to its pseudoperoxidase activity. The polypeptide is Myoglobin (Hystrix cristata (North African crested porcupine)).